A 363-amino-acid polypeptide reads, in one-letter code: Chorismate synthase (363 aa).

An NADP(+)-binding site is contributed by R47. Residues 124–126 (RSS), G285, 300–304 (KPTAT), and R326 each bind FMN.

It belongs to the chorismate synthase family. Homotetramer. The cofactor is FMNH2.

The enzyme catalyses 5-O-(1-carboxyvinyl)-3-phosphoshikimate = chorismate + phosphate. Its pathway is metabolic intermediate biosynthesis; chorismate biosynthesis; chorismate from D-erythrose 4-phosphate and phosphoenolpyruvate: step 7/7. In terms of biological role, catalyzes the anti-1,4-elimination of the C-3 phosphate and the C-6 proR hydrogen from 5-enolpyruvylshikimate-3-phosphate (EPSP) to yield chorismate, which is the branch point compound that serves as the starting substrate for the three terminal pathways of aromatic amino acid biosynthesis. This reaction introduces a second double bond into the aromatic ring system. The sequence is that of Chorismate synthase from Opitutus terrae (strain DSM 11246 / JCM 15787 / PB90-1).